The following is a 365-amino-acid chain: Histidinol-phosphate aminotransferase (365 aa).

N6-(pyridoxal phosphate)lysine is present on K227.

It belongs to the class-II pyridoxal-phosphate-dependent aminotransferase family. Histidinol-phosphate aminotransferase subfamily. In terms of assembly, homodimer. Requires pyridoxal 5'-phosphate as cofactor.

The catalysed reaction is L-histidinol phosphate + 2-oxoglutarate = 3-(imidazol-4-yl)-2-oxopropyl phosphate + L-glutamate. It functions in the pathway amino-acid biosynthesis; L-histidine biosynthesis; L-histidine from 5-phospho-alpha-D-ribose 1-diphosphate: step 7/9. The protein is Histidinol-phosphate aminotransferase of Polaromonas naphthalenivorans (strain CJ2).